The sequence spans 1271 residues: ATP-dependent helicase/nuclease subunit A (1271 aa).

Residues 3–476 enclose the UvrD-like helicase ATP-binding domain; that stretch reads TKWTEEQELA…IMLYKNFRSR (474 aa). An ATP-binding site is contributed by 24–31; sequence AAAGSGKT. Residues 528-824 enclose the UvrD-like helicase C-terminal domain; it reads IENLKVAGDI…RIMSIHKSKG (297 aa).

Belongs to the helicase family. AddA subfamily. Heterodimer of AddA and AddB/RexB. Mg(2+) serves as cofactor.

The enzyme catalyses Couples ATP hydrolysis with the unwinding of duplex DNA by translocating in the 3'-5' direction.. The catalysed reaction is ATP + H2O = ADP + phosphate + H(+). Its function is as follows. The heterodimer acts as both an ATP-dependent DNA helicase and an ATP-dependent, dual-direction single-stranded exonuclease. Recognizes the chi site generating a DNA molecule suitable for the initiation of homologous recombination. The AddA nuclease domain is required for chi fragment generation; this subunit has the helicase and 3' -&gt; 5' nuclease activities. This is ATP-dependent helicase/nuclease subunit A from Clostridium perfringens (strain ATCC 13124 / DSM 756 / JCM 1290 / NCIMB 6125 / NCTC 8237 / Type A).